Here is a 259-residue protein sequence, read N- to C-terminus: Pimeloyl-[acyl-carrier protein] methyl ester esterase (259 aa).

Residues 16-244 (LVFIHGWGLN…ASHAPFLSHP (229 aa)) form the AB hydrolase-1 domain. Substrate contacts are provided by residues W22, 82 to 83 (SL), and 143 to 147 (FFNIQ). Catalysis depends on S82, which acts as the Nucleophile. Catalysis depends on residues D207 and H237. H237 lines the substrate pocket.

It belongs to the AB hydrolase superfamily. Carboxylesterase BioH family. Monomer.

Its subcellular location is the cytoplasm. The catalysed reaction is 6-carboxyhexanoyl-[ACP] methyl ester + H2O = 6-carboxyhexanoyl-[ACP] + methanol + H(+). It functions in the pathway cofactor biosynthesis; biotin biosynthesis. Functionally, the physiological role of BioH is to remove the methyl group introduced by BioC when the pimeloyl moiety is complete. It allows to synthesize pimeloyl-ACP via the fatty acid synthetic pathway through the hydrolysis of the ester bonds of pimeloyl-ACP esters. The chain is Pimeloyl-[acyl-carrier protein] methyl ester esterase from Wigglesworthia glossinidia brevipalpis.